The following is a 199-amino-acid chain: NAD(P)H dehydrogenase (quinone) (199 aa).

The 187-residue stretch at 4–190 folds into the Flavodoxin-like domain; sequence VLVLYYSTYG…DGARYQGRHV (187 aa). FMN is bound by residues 10-15 and 78-80; these read STYGHI and TRY. Y12 is a binding site for NAD(+). W98 provides a ligand contact to substrate. FMN is bound by residues 113–119 and H134; that span reads SSASQHG.

It belongs to the WrbA family. FMN is required as a cofactor.

The catalysed reaction is a quinone + NADH + H(+) = a quinol + NAD(+). It catalyses the reaction a quinone + NADPH + H(+) = a quinol + NADP(+). The polypeptide is NAD(P)H dehydrogenase (quinone) (Methylobacterium sp. (strain 4-46)).